A 232-amino-acid chain; its full sequence is Clarin-1 (232 aa).

A helical membrane pass occupies residues 8-28 (IIFCMAGVFSFACALGVVTAL). Asparagine 48 is a glycosylation site (N-linked (GlcNAc...) asparagine). 3 consecutive transmembrane segments (helical) span residues 101–121 (VILF…FFMY), 135–155 (LGLY…MILF), and 186–206 (TTSF…GLLI).

This sequence belongs to the clarin family. As to expression, widely expressed. Found in the retina.

Its subcellular location is the cell membrane. In terms of biological role, may have a role in the excitatory ribbon synapse junctions between hair cells and cochlear ganglion cells and presumably also in analogous synapses within the retina. The chain is Clarin-1 (CLRN1) from Homo sapiens (Human).